A 106-amino-acid chain; its full sequence is uncharacterized protein (106 aa).

Polar residues predominate over residues 24 to 35 (ANSISSTSFYHK). 2 disordered regions span residues 24–49 (ANSI…SCEE) and 65–87 (LTAE…SSDE). Low complexity-rich tracts occupy residues 36-46 (SSNNNSHANAS) and 74-85 (SLSASNQPASSS).

This is an uncharacterized protein from Arabidopsis thaliana (Mouse-ear cress).